Consider the following 778-residue polypeptide: Centromere/kinetochore protein zw10 homolog (778 aa).

A coiled-coil region spans residues 47–99 (FDRLENLEDIAEMSTRNLSNLIDQTAKDSPEMLAEIKSQAQSCENLVEFLQSM).

The protein belongs to the ZW10 family. Component of the RZZ complex composed of rod-1, czw-1 and zwl-1.

The protein resides in the chromosome. It is found in the centromere. The protein localises to the kinetochore. It localises to the cytoplasm. Its subcellular location is the cytoskeleton. The protein resides in the spindle. Its function is as follows. Essential component of the mitotic checkpoint, which prevents cells from prematurely exiting mitosis. Required for the assembly of the dynein-dynactin and mdf-1-mdf-2 complexes onto kinetochores. Its function related to the spindle assembly machinery and kinetochore-microtubule attachments likely depends on its association in the mitotic RZZ complex. The RZZ complex recruits the spindly-like protein spdl-1 to kinetochores. To prevent irregular chromosome segregation, the complex also inhibits the attachment of the kinetochore-associated NDC80 complex to microtubules. The recruitment of spdl-1 to kinetochores relieves this inhibition. Required for embryonic development. The protein is Centromere/kinetochore protein zw10 homolog of Caenorhabditis elegans.